Reading from the N-terminus, the 216-residue chain is Trimethylamine corrinoid protein 1 (216 aa).

The B12-binding N-terminal domain maps to Met-1 to Lys-92. The B12-binding domain occupies Leu-94 to Leu-216. His-107 serves as a coordination point for methylcob(III)alamin.

The protein belongs to the methylamine corrinoid protein family. In terms of assembly, can form a complex with MttB.

It participates in one-carbon metabolism; methanogenesis from trimethylamine. Acts probably as a methyl group carrier between MttB and either MtbA or MtaA. This Methanosarcina acetivorans (strain ATCC 35395 / DSM 2834 / JCM 12185 / C2A) protein is Trimethylamine corrinoid protein 1 (mttC1).